The sequence spans 117 residues: Holo-[acyl-carrier-protein] synthase (117 aa).

Positions 8 and 57 each coordinate Mg(2+).

It belongs to the P-Pant transferase superfamily. AcpS family. The cofactor is Mg(2+).

It localises to the cytoplasm. The catalysed reaction is apo-[ACP] + CoA = holo-[ACP] + adenosine 3',5'-bisphosphate + H(+). Functionally, transfers the 4'-phosphopantetheine moiety from coenzyme A to a Ser of acyl-carrier-protein. The chain is Holo-[acyl-carrier-protein] synthase from Limosilactobacillus reuteri (Lactobacillus reuteri).